A 566-amino-acid polypeptide reads, in one-letter code: DNA ligase B (566 aa).

Residue Lys-125 is the N6-AMP-lysine intermediate of the active site.

The protein belongs to the NAD-dependent DNA ligase family. LigB subfamily.

It carries out the reaction NAD(+) + (deoxyribonucleotide)n-3'-hydroxyl + 5'-phospho-(deoxyribonucleotide)m = (deoxyribonucleotide)n+m + AMP + beta-nicotinamide D-nucleotide.. In terms of biological role, catalyzes the formation of phosphodiester linkages between 5'-phosphoryl and 3'-hydroxyl groups in double-stranded DNA using NAD as a coenzyme and as the energy source for the reaction. This Pseudomonas putida (strain GB-1) protein is DNA ligase B.